Consider the following 71-residue polypeptide: uncharacterized protein (71 aa).

This is an uncharacterized protein from Escherichia coli (strain K12).